The following is a 97-amino-acid chain: ATP-dependent Clp protease adapter protein ClpS (97 aa).

It belongs to the ClpS family. In terms of assembly, binds to the N-terminal domain of the chaperone ClpA.

Functionally, involved in the modulation of the specificity of the ClpAP-mediated ATP-dependent protein degradation. This Nostoc sp. (strain PCC 7120 / SAG 25.82 / UTEX 2576) protein is ATP-dependent Clp protease adapter protein ClpS.